Reading from the N-terminus, the 184-residue chain is Bifunctional protein PyrR (184 aa).

Positions 98–110 (VVLVDDVLYTGRT) match the PRPP-binding motif.

The protein belongs to the purine/pyrimidine phosphoribosyltransferase family. PyrR subfamily.

It carries out the reaction UMP + diphosphate = 5-phospho-alpha-D-ribose 1-diphosphate + uracil. Regulates the transcription of the pyrimidine nucleotide (pyr) operon in response to exogenous pyrimidines. Its function is as follows. Also displays a weak uracil phosphoribosyltransferase activity which is not physiologically significant. This Roseiflexus castenholzii (strain DSM 13941 / HLO8) protein is Bifunctional protein PyrR.